The following is a 268-amino-acid chain: LOB domain-containing protein 22 (268 aa).

The disordered stretch occupies residues 1–31; the sequence is MPSGKPSSVFPLHPKPTPLKPSSSTSSSNNN. The span at 22 to 31 shows a compositional bias: low complexity; sequence SSSTSSSNNN. In terms of domain architecture, LOB spans 35–136; the sequence is QACAACKYQR…NELEIVLQQL (102 aa).

It belongs to the LOB domain-containing protein family.

This is LOB domain-containing protein 22 (LBD22) from Arabidopsis thaliana (Mouse-ear cress).